The sequence spans 574 residues: Sulfate adenylyltransferase (574 aa).

Residues 1-170 (MANPPHGGVL…VEAIDRLEHY (170 aa)) form an N-terminal region. The segment at 171-395 (DYVGLRYTPA…LRESHPPRNQ (225 aa)) is catalytic. Sulfate is bound at residue Q198. Residues 198–201 (QTRN) and 292–295 (GRDH) each bind ATP. Residues T199, R200, and N201 contribute to the active site. R200 serves as a coordination point for sulfate. A296 is a binding site for sulfate. Position 334 (M334) interacts with ATP. Residues 396–574 (QGFTVFLTGY…LESQGLLTQL (179 aa)) are allosteric regulation domain; adenylyl-sulfate kinase-like. 3'-phosphoadenylyl sulfate is bound by residues 435–438 (ETVR), R452, 478–479 (IA), and R516.

It in the N-terminal section; belongs to the sulfate adenylyltransferase family. In the C-terminal section; belongs to the APS kinase family. As to quaternary structure, homohexamer. Dimer of trimers.

It is found in the cytoplasm. The catalysed reaction is sulfate + ATP + H(+) = adenosine 5'-phosphosulfate + diphosphate. It functions in the pathway sulfur metabolism; hydrogen sulfide biosynthesis; sulfite from sulfate: step 1/3. Its activity is regulated as follows. Allosterically inhibited by 3'-phosphoadenosine 5'-phosphosulfate (PAPS). In terms of biological role, catalyzes the first intracellular reaction of sulfate assimilation, forming adenosine-5'-phosphosulfate (APS) from inorganic sulfate and ATP. Plays an important role in sulfate activation as a component of the biosynthesis pathway of sulfur-containing amino acids. The sequence is that of Sulfate adenylyltransferase from Phaeosphaeria nodorum (strain SN15 / ATCC MYA-4574 / FGSC 10173) (Glume blotch fungus).